A 539-amino-acid polypeptide reads, in one-letter code: Protein Wnt-4 (539 aa).

An N-terminal signal peptide occupies residues 1 to 21 (MPSPTGVFVLMILTHLSFGLG). Residues 34–77 (QNGDLDSSNPAIHHQQHQQHQQHQQHQQHQSNHNLNNGNMNSTI) form a disordered region. Residues 51 to 74 (QQHQQHQQHQQHQSNHNLNNGNMN) are compositionally biased toward low complexity. N-linked (GlcNAc...) asparagine glycosylation is found at asparagine 74 and asparagine 284. 5 cysteine pairs are disulfide-bonded: cysteine 274–cysteine 285, cysteine 322–cysteine 330, cysteine 332–cysteine 349, cysteine 397–cysteine 411, and cysteine 399–cysteine 406. Serine 403 carries O-palmitoleoyl serine; by PORCN lipidation. An N-linked (GlcNAc...) asparagine glycan is attached at asparagine 419. The tract at residues 436–463 (APNQRSMRQVSSSRMKKPKQRRKKPQQS) is disordered. Positions 439 to 448 (QRSMRQVSSS) are enriched in low complexity. Residues 449-460 (RMKKPKQRRKKP) are compositionally biased toward basic residues. Disulfide bonds link cysteine 478/cysteine 497, cysteine 486/cysteine 492, cysteine 496/cysteine 538, cysteine 512/cysteine 529, cysteine 514/cysteine 526, and cysteine 521/cysteine 522.

Belongs to the Wnt family. Palmitoleoylated by porcupine. The lipid group functions as a sorting signal, targeting the ligand to polarized vesicles that transport Wnt4 to unique sites at the cell surface. Depalmitoleoylated by notum, leading to inhibit Wnt signaling pathway.

It is found in the secreted. The protein localises to the extracellular space. It localises to the extracellular matrix. Its function is as follows. Binds as a ligand to a family of frizzled seven-transmembrane receptors and acts through a cascade of genes on the nucleus. Acts downstream of homeotic complex genes in the visceral mesoderm and is required for embryonic segmentation. Also required for cell movement and FAK regulation during ovarian morphogenesis. The polypeptide is Protein Wnt-4 (Wnt4) (Drosophila melanogaster (Fruit fly)).